The primary structure comprises 612 residues: Calcium-dependent protein kinase 27 (612 aa).

Residue G2 is the site of N-myristoyl glycine attachment. The segment at 23 to 132 (PRHAAPSSPS…AHIKRISSAG (110 aa)) is disordered. Low complexity predominate over residues 28 to 50 (PSSPSQPTTTSRSIPVVLPSAPS). Residues 51-100 (SKPPPPTQTAPPVPVVISEPPPPQPQPEPQPAAPSQPPPPQEQPSPPPPA) show a composition bias toward pro residues. Basic residues predominate over residues 117 to 127 (SRAKKPAHIKR). Positions 150–408 (YSLGRKLGQG…AHEVLCHPWL (259 aa)) constitute a Protein kinase domain. Residues 156–164 (LGQGQFGTT) and K179 contribute to the ATP site. Residue D274 is the Proton acceptor of the active site. The interval 414-444 (APDKPLDSAVLSRLRQFSAMNKLKKMALRVI) is autoinhibitory domain. 4 EF-hand domains span residues 451–486 (EEIA…VGAN), 487–522 (MKES…LNKV), 523–558 (ERED…FGIE), and 561–592 (RLED…TTTG). Positions 464, 466, 468, 470, 475, 500, 502, 504, 506, 511, 536, 538, 540, 542, 547, 570, 572, 574, 576, and 581 each coordinate Ca(2+).

This sequence belongs to the protein kinase superfamily. Ser/Thr protein kinase family. CDPK subfamily.

The protein localises to the membrane. The catalysed reaction is L-seryl-[protein] + ATP = O-phospho-L-seryl-[protein] + ADP + H(+). The enzyme catalyses L-threonyl-[protein] + ATP = O-phospho-L-threonyl-[protein] + ADP + H(+). Activated by calcium. Autophosphorylation may play an important role in the regulation of the kinase activity. Its function is as follows. May play a role in signal transduction pathways that involve calcium as a second messenger. This Oryza sativa subsp. japonica (Rice) protein is Calcium-dependent protein kinase 27.